The following is a 231-amino-acid chain: GrpE protein homolog, mitochondrial (231 aa).

Positions 49–71 (SEKAGEKAEEKAEEQNLSAEEQK) are disordered.

This sequence belongs to the GrpE family. In terms of assembly, component of the PAM complex, at least composed of mtHsp70, MGE1, TIM44, PAM16, PAM17 and PAM18.

It is found in the mitochondrion matrix. In terms of biological role, essential component of the PAM complex, a complex required for the translocation of transit peptide-containing proteins from the inner membrane into the mitochondrial matrix in an ATP-dependent manner. Seems to control the nucleotide-dependent binding of SSC1 to substrate proteins. The protein is GrpE protein homolog, mitochondrial (mge1) of Candida glabrata (strain ATCC 2001 / BCRC 20586 / JCM 3761 / NBRC 0622 / NRRL Y-65 / CBS 138) (Yeast).